The following is a 443-amino-acid chain: Exodeoxyribonuclease 7 large subunit (443 aa).

It belongs to the XseA family. As to quaternary structure, heterooligomer composed of large and small subunits.

Its subcellular location is the cytoplasm. It catalyses the reaction Exonucleolytic cleavage in either 5'- to 3'- or 3'- to 5'-direction to yield nucleoside 5'-phosphates.. Its function is as follows. Bidirectionally degrades single-stranded DNA into large acid-insoluble oligonucleotides, which are then degraded further into small acid-soluble oligonucleotides. The sequence is that of Exodeoxyribonuclease 7 large subunit from Vibrio parahaemolyticus serotype O3:K6 (strain RIMD 2210633).